Here is a 321-residue protein sequence, read N- to C-terminus: Serine protease 52 (321 aa).

The N-terminal stretch at 1–27 is a signal peptide; the sequence is MKRWKDRRTGLLLPLVLLLFGACSSLA. One can recognise a Peptidase S1 domain in the interval 56-287; the sequence is IVGGKPANIL…YVRWISKQTA (232 aa). A disulfide bond links C81 and C97. Residues H96 and D142 each act as charge relay system in the active site. N153 carries N-linked (GlcNAc...) asparagine glycosylation. 3 disulfide bridges follow: C175-C242, C208-C221, and C232-C263. S236 (charge relay system) is an active-site residue. The chain crosses the membrane as a helical span at residues 300 to 320; it reads ACPLVLSCRAILFLYFVMFLL.

Belongs to the peptidase S1 family.

The protein localises to the membrane. In terms of biological role, probable serine protease. This Mus musculus (Mouse) protein is Serine protease 52 (Prss52).